The primary structure comprises 291 residues: Quinol oxidase subunit 2 (291 aa).

Positions M1–K28 are cleaved as a signal peptide. 2 helical membrane-spanning segments follow: residues S49–I69 and L91–V111.

Belongs to the cytochrome c oxidase subunit 2 family.

The protein localises to the cell membrane. The catalysed reaction is 2 a quinol + O2 = 2 a quinone + 2 H2O. Its function is as follows. Catalyzes quinol oxidation with the concomitant reduction of oxygen to water. Subunit II transfers the electrons from a quinol to the binuclear center of the catalytic subunit I. This chain is Quinol oxidase subunit 2, found in Bacillus cereus (strain ATCC 10987 / NRS 248).